Here is a 356-residue protein sequence, read N- to C-terminus: Tyrosine recombinase XerS (356 aa).

Residues 16–121 (IMPWYVLDYY…ALSSLYKYLT (106 aa)) form the Core-binding (CB) domain. One can recognise a Tyr recombinase domain in the interval 169 to 354 (AFLDYVDKEY…VNDEQKNALD (186 aa)). Residues Arg-210, Lys-234, His-306, Arg-309, and His-332 contribute to the active site. Residue Tyr-341 is the O-(3'-phospho-DNA)-tyrosine intermediate of the active site.

It belongs to the 'phage' integrase family. XerS subfamily.

It is found in the cytoplasm. With respect to regulation, ftsK is required for recombination. In terms of biological role, site-specific tyrosine recombinase, which acts by catalyzing the cutting and rejoining of the recombining DNA molecules. Essential to convert dimers of the bacterial chromosome into monomers to permit their segregation at cell division. The protein is Tyrosine recombinase XerS of Streptococcus pyogenes serotype M2 (strain MGAS10270).